A 226-amino-acid polypeptide reads, in one-letter code: Ribonuclease 3 (226 aa).

The region spanning 6–128 (TNRLQKKLGY…LIGGVFLDSD (123 aa)) is the RNase III domain. Glutamate 41 lines the Mg(2+) pocket. Residue aspartate 45 is part of the active site. Mg(2+)-binding residues include aspartate 114 and glutamate 117. The active site involves glutamate 117. The 71-residue stretch at 155–225 (DPKTRLQEYL…AEQALKLLEL (71 aa)) folds into the DRBM domain.

It belongs to the ribonuclease III family. In terms of assembly, homodimer. Requires Mg(2+) as cofactor.

The protein localises to the cytoplasm. The catalysed reaction is Endonucleolytic cleavage to 5'-phosphomonoester.. In terms of biological role, digests double-stranded RNA. Involved in the processing of primary rRNA transcript to yield the immediate precursors to the large and small rRNAs (23S and 16S). Processes some mRNAs, and tRNAs when they are encoded in the rRNA operon. Processes pre-crRNA and tracrRNA of type II CRISPR loci if present in the organism. The chain is Ribonuclease 3 from Sodalis glossinidius (strain morsitans).